The primary structure comprises 410 residues: Chloride intracellular channel protein 5 (410 aa).

The short motif at 191–194 (CPFS) is the G-site element. A helical transmembrane segment spans residues 193–213 (FSQRLFMILWLKGVVFNVTTV). The 141-residue stretch at 260–400 (YPKLAAKHRE…AADSEIELAY (141 aa)) folds into the GST C-terminal domain.

Belongs to the chloride channel CLIC family. Component of a multimeric complex consisting of several cytoskeletal proteins, including actin, ezrin, alpha-actinin, gelsolin, and IQGAP1. Interacts with AKAP9. Interacts with TPRN. TPRN, CLIC5 and PTPQR form concentric rings at the base of stereocilia and may form a complex. Interacts with EZR, MYO6 and RDX; the proteins may work together as a complex to stabilize linkages between the plasma membrane and subjacent actin cytoskeleton at the stereocilium base. In terms of tissue distribution, widely expressed in both fetal and adult human tissues. Isoform 1 is expressed in renal glomeruli endothelial cells and podocytes (at protein level).

It is found in the cytoplasm. The protein localises to the cytoskeleton. The protein resides in the cell cortex. Its subcellular location is the membrane. It localises to the apical cell membrane. It is found in the mitochondrion. The protein localises to the cell projection. The protein resides in the stereocilium. Its subcellular location is the golgi apparatus. It localises to the microtubule organizing center. It is found in the centrosome. The catalysed reaction is chloride(in) = chloride(out). It carries out the reaction Na(+)(in) = Na(+)(out). The enzyme catalyses K(+)(in) = K(+)(out). With respect to regulation, inhibited by F-actin. Functionally, in the soluble state, catalyzes glutaredoxin-like thiol disulfide exchange reactions with reduced glutathione as electron donor. Can insert into membranes and form non-selective ion channels almost equally permeable to Na(+), K(+) and Cl(-). Required for normal hearing. It is necessary for the formation of stereocilia in the inner ear and normal development of the organ of Corti. May play a role in the regulation of transepithelial ion absorption and secretion. Is required for the development and/or maintenance of the proper glomerular endothelial cell and podocyte architecture. Plays a role in formation of the lens suture in the eye, which is important for normal optical properties of the lens. In Homo sapiens (Human), this protein is Chloride intracellular channel protein 5.